The primary structure comprises 331 residues: 6-phosphogluconolactonase (331 aa).

The protein belongs to the cycloisomerase 2 family.

It catalyses the reaction 6-phospho-D-glucono-1,5-lactone + H2O = 6-phospho-D-gluconate + H(+). Its pathway is carbohydrate degradation; pentose phosphate pathway; D-ribulose 5-phosphate from D-glucose 6-phosphate (oxidative stage): step 2/3. Its function is as follows. Catalyzes the hydrolysis of 6-phosphogluconolactone to 6-phosphogluconate. This chain is 6-phosphogluconolactonase, found in Sodalis glossinidius (strain morsitans).